The following is an 89-amino-acid chain: OMEGA-ectatommitoxin(02)-Rm1a (89 aa).

A signal peptide spans 1 to 30 (MKDSYISIVIAYLMVTFILVSSMPIEGEKG). Disulfide bonds link Cys-39/Cys-52, Cys-47/Cys-68, and Cys-70/Cys-79. The region spanning 43-80 (YANYCFNGKCVHVVAQDEPGKPCYSCICDKFYIGKRCG) is the EGF-like domain.

Belongs to the EGF domain peptide family. As to expression, expressed by the venom gland.

Its subcellular location is the secreted. In terms of biological role, ant peptide with probable defensive activity which acts as a potent agonist of the mammalian epidermal growth factor receptor (EGFR). Mimics, both structurally and functionally, vertebrate epidermal growth factor (EGF) peptide hormones. In vivo, intraplantar injection in mice causes long-lasting (several days) hypersensitivity of the injected paw to both mechanical and thermal stimuli. Its long-lasting effect is unusual for venom toxins whose effects are usually immediate. One possible explanation is that it would reduce the duration of a nest attack, discourage future attacks, or enhance the actions of subsequent exposure to other pain-inducing venom peptides. The sequence is that of OMEGA-ectatommitoxin(02)-Rm1a from Rhytidoponera metallica (Australian green-headed ant).